We begin with the raw amino-acid sequence, 173 residues long: Nucleoside-triphosphatase THEP1 (173 aa).

Residues 15-22 (GMPGVGKT) and 101-108 (LKIIDEIG) contribute to the ATP site.

This sequence belongs to the THEP1 NTPase family.

The catalysed reaction is a ribonucleoside 5'-triphosphate + H2O = a ribonucleoside 5'-diphosphate + phosphate + H(+). In terms of biological role, has nucleotide phosphatase activity towards ATP, GTP, CTP, TTP and UTP. May hydrolyze nucleoside diphosphates with lower efficiency. The sequence is that of Nucleoside-triphosphatase THEP1 from Pyrobaculum aerophilum (strain ATCC 51768 / DSM 7523 / JCM 9630 / CIP 104966 / NBRC 100827 / IM2).